The chain runs to 96 residues: Protein RnfH (96 aa).

The protein belongs to the UPF0125 (RnfH) family.

The chain is Protein RnfH from Escherichia fergusonii (strain ATCC 35469 / DSM 13698 / CCUG 18766 / IAM 14443 / JCM 21226 / LMG 7866 / NBRC 102419 / NCTC 12128 / CDC 0568-73).